The chain runs to 393 residues: Elongation factor Tu (393 aa).

A tr-type G domain is found at 10–203; it reads KPHVNIGTIG…AVDDYIPEPV (194 aa). The tract at residues 19 to 26 is G1; the sequence is GHVDHGKT. Residue 19 to 26 participates in GTP binding; that stretch reads GHVDHGKT. Threonine 26 is a Mg(2+) binding site. The segment at 60-64 is G2; it reads GITIS. A G3 region spans residues 81 to 84; sequence DCPG. GTP contacts are provided by residues 81–85 and 136–139; these read DCPGH and NKVD. Residues 136-139 are G4; that stretch reads NKVD. A G5 region spans residues 173 to 175; the sequence is SAL.

Belongs to the TRAFAC class translation factor GTPase superfamily. Classic translation factor GTPase family. EF-Tu/EF-1A subfamily. In terms of assembly, monomer.

The protein resides in the cytoplasm. It carries out the reaction GTP + H2O = GDP + phosphate + H(+). Functionally, GTP hydrolase that promotes the GTP-dependent binding of aminoacyl-tRNA to the A-site of ribosomes during protein biosynthesis. This Chlorobaculum parvum (strain DSM 263 / NCIMB 8327) (Chlorobium vibrioforme subsp. thiosulfatophilum) protein is Elongation factor Tu.